The sequence spans 126 residues: Fluoride-specific ion channel FluC (126 aa).

Transmembrane regions (helical) follow at residues 4–24 (PLLS…FLGL), 33–53 (IPLG…FAMA), 67–87 (FVIT…IEIV), and 97–117 (MAML…CLGL). Residues Gly74 and Thr77 each coordinate Na(+).

This sequence belongs to the fluoride channel Fluc/FEX (TC 1.A.43) family.

Its subcellular location is the cell inner membrane. It carries out the reaction fluoride(in) = fluoride(out). Its activity is regulated as follows. Na(+) is not transported, but it plays an essential structural role and its presence is essential for fluoride channel function. Functionally, fluoride-specific ion channel. Important for reducing fluoride concentration in the cell, thus reducing its toxicity. The chain is Fluoride-specific ion channel FluC from Acinetobacter baumannii (strain ATCC 17978 / DSM 105126 / CIP 53.77 / LMG 1025 / NCDC KC755 / 5377).